Consider the following 30-residue polypeptide: Kalata-B17 (30 aa).

The cyclopeptide (Gly-Asn) cross-link spans G1–N30. 3 disulfide bridges follow: C4–C21, C8–C23, and C13–C28.

This is a cyclic peptide.

Probably participates in a plant defense mechanism. This is Kalata-B17 from Oldenlandia affinis.